The following is a 145-amino-acid chain: uncharacterized protein (145 aa).

The segment covering 1–18 (MAEQQPSKEEKKEDKKDE) has biased composition (basic and acidic residues). Residues 1 to 61 (MAEQQPSKEE…CTEGEWDASD (61 aa)) are disordered.

This is an uncharacterized protein from Caenorhabditis elegans.